The following is a 637-amino-acid chain: Chaperone protein DnaK (637 aa).

A Phosphothreonine; by autocatalysis modification is found at threonine 196. 2 disordered regions span residues 503–525 (AEINKMKDDAKQHADEDKKRKEE) and 598–637 (SGAGAAQAQPEAPQNSGSSQSSGGDGAVNAEYEVINDDKK). The segment covering 598-619 (SGAGAAQAQPEAPQNSGSSQSS) has biased composition (low complexity).

This sequence belongs to the heat shock protein 70 family.

In terms of biological role, acts as a chaperone. In Chlorobium chlorochromatii (strain CaD3), this protein is Chaperone protein DnaK.